Here is a 210-residue protein sequence, read N- to C-terminus: Large ribosomal subunit protein bL25 (210 aa).

Positions 179 to 210 (LPPQQEEEIHSGEQQEPGHPDAEEGRETTPES) are disordered. The span at 185–210 (EEIHSGEQQEPGHPDAEEGRETTPES) shows a compositional bias: basic and acidic residues.

This sequence belongs to the bacterial ribosomal protein bL25 family. CTC subfamily. As to quaternary structure, part of the 50S ribosomal subunit; part of the 5S rRNA/L5/L18/L25 subcomplex. Contacts the 5S rRNA. Binds to the 5S rRNA independently of L5 and L18.

In terms of biological role, this is one of the proteins that binds to the 5S RNA in the ribosome where it forms part of the central protuberance. This chain is Large ribosomal subunit protein bL25, found in Geobacillus sp. (strain WCH70).